The chain runs to 1571 residues: Pentafunctional AROM polypeptide 2 (1571 aa).

The segment at 1 to 380 (MAEPTKISIL…YEPKASVVSN (380 aa)) is 3-dehydroquinate synthase. NAD(+) is bound by residues 44–46 (DTN), 81–84 (ENSK), 112–114 (GGV), and Asp-117. A 7-phospho-2-dehydro-3-deoxy-D-arabino-heptonate-binding site is contributed by Arg-128. An NAD(+)-binding site is contributed by 137-138 (TT). Residues Asp-144 and Lys-150 each contribute to the 7-phospho-2-dehydro-3-deoxy-D-arabino-heptonate site. Lys-159 is an NAD(+) binding site. Asn-160 is a binding site for 7-phospho-2-dehydro-3-deoxy-D-arabino-heptonate. NAD(+) is bound by residues 177–180 (FIDT) and Asn-188. Residue Glu-192 participates in Zn(2+) binding. Residues 192-195 (EVIK) and Lys-246 each bind 7-phospho-2-dehydro-3-deoxy-D-arabino-heptonate. Catalysis depends on Glu-256, which acts as the Proton acceptor; for 3-dehydroquinate synthase activity. 7-phospho-2-dehydro-3-deoxy-D-arabino-heptonate-binding positions include 260–264 (RNLLN) and His-267. A Zn(2+)-binding site is contributed by His-267. His-271 acts as the Proton acceptor; for 3-dehydroquinate synthase activity in catalysis. His-283 and Lys-352 together coordinate 7-phospho-2-dehydro-3-deoxy-D-arabino-heptonate. A Zn(2+)-binding site is contributed by His-283. An EPSP synthase region spans residues 393 to 838 (VIPGVPKNLN…WDALKQKFGV (446 aa)). Residue Cys-820 is the For EPSP synthase activity of the active site. Residues 859–1051 (NASIIIIGMR…RKKHLSFFVS (193 aa)) are shikimate kinase. An ATP-binding site is contributed by 866 to 873 (GMRGAGKT). Residues 1052-1273 (LTLPDLRESG…AAPGQLSAAE (222 aa)) form a 3-dehydroquinase region. The Proton acceptor; for 3-dehydroquinate dehydratase activity role is filled by His-1175. Lys-1203 acts as the Schiff-base intermediate with substrate; for 3-dehydroquinate dehydratase activity in catalysis. Residues 1286 to 1571 (AKKFAVLGKP…NAVLGTNETK (286 aa)) are shikimate dehydrogenase.

The protein in the N-terminal section; belongs to the sugar phosphate cyclases superfamily. Dehydroquinate synthase family. It in the 2nd section; belongs to the EPSP synthase family. This sequence in the 3rd section; belongs to the shikimate kinase family. In the 4th section; belongs to the type-I 3-dehydroquinase family. The protein in the C-terminal section; belongs to the shikimate dehydrogenase family. As to quaternary structure, homodimer. Zn(2+) serves as cofactor.

The protein localises to the cytoplasm. It catalyses the reaction 7-phospho-2-dehydro-3-deoxy-D-arabino-heptonate = 3-dehydroquinate + phosphate. It carries out the reaction 3-dehydroquinate = 3-dehydroshikimate + H2O. The catalysed reaction is shikimate + NADP(+) = 3-dehydroshikimate + NADPH + H(+). The enzyme catalyses shikimate + ATP = 3-phosphoshikimate + ADP + H(+). It catalyses the reaction 3-phosphoshikimate + phosphoenolpyruvate = 5-O-(1-carboxyvinyl)-3-phosphoshikimate + phosphate. It participates in metabolic intermediate biosynthesis; chorismate biosynthesis; chorismate from D-erythrose 4-phosphate and phosphoenolpyruvate: step 2/7. It functions in the pathway metabolic intermediate biosynthesis; chorismate biosynthesis; chorismate from D-erythrose 4-phosphate and phosphoenolpyruvate: step 3/7. The protein operates within metabolic intermediate biosynthesis; chorismate biosynthesis; chorismate from D-erythrose 4-phosphate and phosphoenolpyruvate: step 4/7. Its pathway is metabolic intermediate biosynthesis; chorismate biosynthesis; chorismate from D-erythrose 4-phosphate and phosphoenolpyruvate: step 5/7. It participates in metabolic intermediate biosynthesis; chorismate biosynthesis; chorismate from D-erythrose 4-phosphate and phosphoenolpyruvate: step 6/7. Functionally, the AROM polypeptide catalyzes 5 consecutive enzymatic reactions in prechorismate polyaromatic amino acid biosynthesis. This Talaromyces marneffei (strain ATCC 18224 / CBS 334.59 / QM 7333) (Penicillium marneffei) protein is Pentafunctional AROM polypeptide 2.